A 303-amino-acid chain; its full sequence is Mycothiol acetyltransferase (303 aa).

D33 contacts 1D-myo-inositol 2-(L-cysteinylamino)-2-deoxy-alpha-D-glucopyranoside. Acetyl-CoA is bound by residues V78–V80 and R86–S91. In terms of domain architecture, N-acetyltransferase spans V150–V303. 1D-myo-inositol 2-(L-cysteinylamino)-2-deoxy-alpha-D-glucopyranoside is bound by residues E177, K218, and E226. V230–V232 is a binding site for acetyl-CoA. Y269 is a binding site for 1D-myo-inositol 2-(L-cysteinylamino)-2-deoxy-alpha-D-glucopyranoside. N274–K279 contacts acetyl-CoA.

The protein belongs to the acetyltransferase family. MshD subfamily. In terms of assembly, monomer.

The catalysed reaction is 1D-myo-inositol 2-(L-cysteinylamino)-2-deoxy-alpha-D-glucopyranoside + acetyl-CoA = mycothiol + CoA + H(+). In terms of biological role, catalyzes the transfer of acetyl from acetyl-CoA to desacetylmycothiol (Cys-GlcN-Ins) to form mycothiol. The polypeptide is Mycothiol acetyltransferase (Mycolicibacterium gilvum (strain PYR-GCK) (Mycobacterium gilvum (strain PYR-GCK))).